The chain runs to 222 residues: Triosephosphate isomerase (222 aa).

Residue 9 to 11 (NYK) coordinates substrate. Catalysis depends on H93, which acts as the Electrophile. Catalysis depends on E141, which acts as the Proton acceptor. Residues I146, G181, and 202-203 (AS) contribute to the substrate site.

This sequence belongs to the triosephosphate isomerase family. Homotetramer; dimer of dimers.

It localises to the cytoplasm. The catalysed reaction is D-glyceraldehyde 3-phosphate = dihydroxyacetone phosphate. The protein operates within carbohydrate biosynthesis; gluconeogenesis. Its pathway is carbohydrate degradation; glycolysis; D-glyceraldehyde 3-phosphate from glycerone phosphate: step 1/1. Its function is as follows. Involved in the gluconeogenesis. Catalyzes stereospecifically the conversion of dihydroxyacetone phosphate (DHAP) to D-glyceraldehyde-3-phosphate (G3P). This is Triosephosphate isomerase from Methanobrevibacter smithii (strain ATCC 35061 / DSM 861 / OCM 144 / PS).